The chain runs to 546 residues: T-complex protein 1 subunit zeta (546 aa).

Ser-2 carries the N-acetylserine modification. Ser-249 carries the phosphoserine modification.

Belongs to the TCP-1 chaperonin family. As to quaternary structure, heterooligomeric complex of about 850 to 900 kDa that forms two stacked rings, 12 to 16 nm in diameter.

Its subcellular location is the cytoplasm. Its function is as follows. Molecular chaperone; assists the folding of proteins upon ATP hydrolysis. Known to play a role, in vitro, in the folding of actin and tubulin. In yeast may play a role in mitotic spindle formation. In Saccharomyces cerevisiae (strain ATCC 204508 / S288c) (Baker's yeast), this protein is T-complex protein 1 subunit zeta (CCT6).